The chain runs to 162 residues: Phosphopantetheine adenylyltransferase (162 aa).

Thr-10 provides a ligand contact to substrate. Residues Thr-10–Phe-11 and His-18 contribute to the ATP site. Substrate-binding residues include Lys-42, Met-74, and Arg-88. ATP is bound by residues Gly-89 to Arg-91, Glu-99, and Tyr-124 to Thr-130.

It belongs to the bacterial CoaD family. As to quaternary structure, homohexamer. The cofactor is Mg(2+).

It is found in the cytoplasm. It carries out the reaction (R)-4'-phosphopantetheine + ATP + H(+) = 3'-dephospho-CoA + diphosphate. The protein operates within cofactor biosynthesis; coenzyme A biosynthesis; CoA from (R)-pantothenate: step 4/5. Its function is as follows. Reversibly transfers an adenylyl group from ATP to 4'-phosphopantetheine, yielding dephospho-CoA (dPCoA) and pyrophosphate. This Aliivibrio fischeri (strain ATCC 700601 / ES114) (Vibrio fischeri) protein is Phosphopantetheine adenylyltransferase.